Here is a 128-residue protein sequence, read N- to C-terminus: Ribonuclease P protein component (128 aa).

This sequence belongs to the RnpA family. In terms of assembly, consists of a catalytic RNA component (M1 or rnpB) and a protein subunit.

The enzyme catalyses Endonucleolytic cleavage of RNA, removing 5'-extranucleotides from tRNA precursor.. RNaseP catalyzes the removal of the 5'-leader sequence from pre-tRNA to produce the mature 5'-terminus. It can also cleave other RNA substrates such as 4.5S RNA. The protein component plays an auxiliary but essential role in vivo by binding to the 5'-leader sequence and broadening the substrate specificity of the ribozyme. The polypeptide is Ribonuclease P protein component (Prochlorococcus marinus (strain MIT 9215)).